A 232-amino-acid chain; its full sequence is Ubiquinone biosynthesis O-methyltransferase (232 aa).

S-adenosyl-L-methionine is bound by residues R36, G55, D76, and M120.

It belongs to the methyltransferase superfamily. UbiG/COQ3 family.

The enzyme catalyses a 3-demethylubiquinol + S-adenosyl-L-methionine = a ubiquinol + S-adenosyl-L-homocysteine + H(+). The catalysed reaction is a 3-(all-trans-polyprenyl)benzene-1,2-diol + S-adenosyl-L-methionine = a 2-methoxy-6-(all-trans-polyprenyl)phenol + S-adenosyl-L-homocysteine + H(+). It participates in cofactor biosynthesis; ubiquinone biosynthesis. Its function is as follows. O-methyltransferase that catalyzes the 2 O-methylation steps in the ubiquinone biosynthetic pathway. The chain is Ubiquinone biosynthesis O-methyltransferase from Burkholderia vietnamiensis (strain G4 / LMG 22486) (Burkholderia cepacia (strain R1808)).